Consider the following 97-residue polypeptide: Co-chaperonin GroES (97 aa).

The protein belongs to the GroES chaperonin family. Heptamer of 7 subunits arranged in a ring. Interacts with the chaperonin GroEL.

It localises to the cytoplasm. Together with the chaperonin GroEL, plays an essential role in assisting protein folding. The GroEL-GroES system forms a nano-cage that allows encapsulation of the non-native substrate proteins and provides a physical environment optimized to promote and accelerate protein folding. GroES binds to the apical surface of the GroEL ring, thereby capping the opening of the GroEL channel. This Bifidobacterium longum (strain NCC 2705) protein is Co-chaperonin GroES.